The sequence spans 388 residues: S-adenosylmethionine synthase (388 aa).

Position 17 (His17) interacts with ATP. Asp19 provides a ligand contact to Mg(2+). Glu45 is a binding site for K(+). 2 residues coordinate L-methionine: Glu58 and Gln102. Positions 102–112 (QSVHIAQGVDA) are flexible loop. Residues 167–169 (DAK), Asp241, 247–248 (RK), Ala264, and Lys268 contribute to the ATP site. L-methionine is bound at residue Asp241. Residue Lys272 coordinates L-methionine.

This sequence belongs to the AdoMet synthase family. Homotetramer; dimer of dimers. Mg(2+) serves as cofactor. The cofactor is K(+).

The protein localises to the cytoplasm. The catalysed reaction is L-methionine + ATP + H2O = S-adenosyl-L-methionine + phosphate + diphosphate. It participates in amino-acid biosynthesis; S-adenosyl-L-methionine biosynthesis; S-adenosyl-L-methionine from L-methionine: step 1/1. Its function is as follows. Catalyzes the formation of S-adenosylmethionine (AdoMet) from methionine and ATP. The overall synthetic reaction is composed of two sequential steps, AdoMet formation and the subsequent tripolyphosphate hydrolysis which occurs prior to release of AdoMet from the enzyme. In Maricaulis maris (strain MCS10) (Caulobacter maris), this protein is S-adenosylmethionine synthase.